The primary structure comprises 214 residues: Adenylate kinase (214 aa).

An ATP-binding site is contributed by 11 to 16; it reads GTGKGT. Residues 31 to 61 form an NMP region; sequence SSGDLFRFYAKEEKTALAEEIKSYINNGLYV. Residues serine 32, arginine 37, 59–61, 87–90, and glutamine 94 each bind AMP; these read LYV and GYPR. The LID stretch occupies residues 124-163; it reads LRRSCPQCKRIYNINSVDFKPKVANLCDLCKVELIHRKDD. Residue arginine 125 coordinates ATP. Positions 128 and 131 each coordinate Zn(2+). 134 to 135 is a binding site for ATP; it reads IY. 2 residues coordinate Zn(2+): cysteine 150 and cysteine 153. The AMP site is built by arginine 160 and arginine 171. An ATP-binding site is contributed by lysine 199.

This sequence belongs to the adenylate kinase family. Monomer.

Its subcellular location is the cytoplasm. It carries out the reaction AMP + ATP = 2 ADP. It functions in the pathway purine metabolism; AMP biosynthesis via salvage pathway; AMP from ADP: step 1/1. Catalyzes the reversible transfer of the terminal phosphate group between ATP and AMP. Plays an important role in cellular energy homeostasis and in adenine nucleotide metabolism. The sequence is that of Adenylate kinase from Mycoplasmoides gallisepticum (strain R(low / passage 15 / clone 2)) (Mycoplasma gallisepticum).